Consider the following 361-residue polypeptide: Phospho-N-acetylmuramoyl-pentapeptide-transferase (361 aa).

Helical transmembrane passes span 28–48, 74–94, 99–119, 133–153, 168–188, 203–223, 236–256, 263–283, 288–308, and 338–358; these read LAIIITLSLSFITGPILIKFL, TMGGIMIILSSCLSTLLLADL, IWITLFGFISFGIIGFMDDYA, SKLLLQGIISFIICVLLEYLD, LSLDLGYFYIVFAMFVIVGSS, VPIAFTAGSFALISYLVGNLI, TGELTVLCAGLVGSCLGFLWF, VFMGDTGSLSLGGVLGIISVI, IVLAIVGGLFVIETTSVILQV, and KVVIRFWIISVIFALIGLSSL.

It belongs to the glycosyltransferase 4 family. MraY subfamily. Requires Mg(2+) as cofactor.

Its subcellular location is the cell membrane. It carries out the reaction UDP-N-acetyl-alpha-D-muramoyl-L-alanyl-gamma-D-glutamyl-meso-2,6-diaminopimeloyl-D-alanyl-D-alanine + di-trans,octa-cis-undecaprenyl phosphate = di-trans,octa-cis-undecaprenyl diphospho-N-acetyl-alpha-D-muramoyl-L-alanyl-D-glutamyl-meso-2,6-diaminopimeloyl-D-alanyl-D-alanine + UMP. Its pathway is cell wall biogenesis; peptidoglycan biosynthesis. Catalyzes the initial step of the lipid cycle reactions in the biosynthesis of the cell wall peptidoglycan: transfers peptidoglycan precursor phospho-MurNAc-pentapeptide from UDP-MurNAc-pentapeptide onto the lipid carrier undecaprenyl phosphate, yielding undecaprenyl-pyrophosphoryl-MurNAc-pentapeptide, known as lipid I. In Rickettsia montanensis, this protein is Phospho-N-acetylmuramoyl-pentapeptide-transferase.